Consider the following 441-residue polypeptide: MLRKLTSNSSRWTTTHLGSLWQEVGGHPIRRGLILHHHCRPLAAVSSGVILRQKEESRWSPNSGGKLANLRCWPEYRLHSATKRRTLGELVLRDYSSNNISDKKPEPKSLLQSIVQNPYARLMRIDRPIGSWLLFWPCGWSIALSAPAGCWPDLWTLTLFGAGAFIMRGAGCTINDMWDRDIDGKVARTRNRPLVAGELTSADAWFFLGAQLGVGLLILLELNWYSIVLGASSLGLVIIYPLMKRITHWPQLVLGMTFNWGALLGWSATQGSVMWSACLPLYVAGVCWTIVYDTIYAHQDKVDDALLGIKSTAIRFGDNTKLWLSGFSTAMIGGLVASGMVCEQTWPYYSAVGVISAHLAHQIYSLNIDNPTDCATKFISNHQVGLILFLGIVLGTLYKGYSQRAGKSSTTSSSSTSSSSSPSSGLLLAATNHHQPARQAS.

The transit peptide at 1–95 (MLRKLTSNSS…TLGELVLRDY (95 aa)) directs the protein to the mitochondrion. Transmembrane regions (helical) follow at residues 129–149 (IGSWLLFWPCGWSIALSAPAG), 154–174 (LWTLTLFGAGAFIMRGAGCTI), 204–224 (AWFFLGAQLGVGLLILLELNW), 225–245 (YSIVLGASSLGLVIIYPLMKR), 246–266 (ITHWPQLVLGMTFNWGALLGW), 271–291 (GSVMWSACLPLYVAGVCWTIV), 322–342 (LWLSGFSTAMIGGLVASGMVC), and 378–398 (FISNHQVGLILFLGIVLGTLY). A disordered region spans residues 405–441 (AGKSSTTSSSSTSSSSSPSSGLLLAATNHHQPARQAS). Low complexity predominate over residues 408–424 (SSTTSSSSTSSSSSPSS). Polar residues predominate over residues 432 to 441 (NHHQPARQAS).

Belongs to the UbiA prenyltransferase family. The cofactor is Mg(2+).

The protein localises to the mitochondrion inner membrane. It carries out the reaction an all-trans-polyprenyl diphosphate + 4-hydroxybenzoate = a 4-hydroxy-3-(all-trans-polyprenyl)benzoate + diphosphate. It participates in cofactor biosynthesis; ubiquinone biosynthesis. In terms of biological role, catalyzes the prenylation of para-hydroxybenzoate (PHB) with an all-trans polyprenyl group. Mediates the second step in the final reaction sequence of coenzyme Q (CoQ) biosynthesis, which is the condensation of the polyisoprenoid side chain with PHB, generating the first membrane-bound Q intermediate. This Aedes aegypti (Yellowfever mosquito) protein is 4-hydroxybenzoate polyprenyltransferase, mitochondrial.